Reading from the N-terminus, the 861-residue chain is MEKEYCPKNIEPYVQQYWKDNKVFHVYEDDKKEKYYCLPMLPYPSGKLHMGHVRNYTISDVISRYQRMLGKNVLQPIGWDAFGLPAEEAAIKNKTKPSDWTQKNIKYMKKQLQSLGFSYDWSREITTCKPDYYCWEQWFFIQLYKKKLVYKKNSFVNWCPYDKTVLANEQVIKGCCWRCQNKIKVKKIPQWFIKIRNYAESLHNDLNDLENWPEKVKNMQRNWIGRSKGFEIVFNVLNSNKKIKAFTNRLDLIMGATYISISPCHEFSVHVSKEKKEIQKFIDQKINNSASQEDIEKIKFEGINSNMFVIHPITNKKIPVWISNFIQKEYGTNAIISVPGHNQNDWNFSIKHNLKIKYVIKNKKYKNTQLHNLFTTEKGILYNSGEFNNLNYHNATEKIKKTLLKKKIIKEKINYKLQDWCISRQRYWGTPIPMATKKNGEIIAIPEKNLPVLLPEIKNYSDSLQKPMDSSSKWANIKIENQDVIRETDTFDTFMESSWYYARYTCPNFNTGMIDPTASKYWLPVDQYIGGIEHATMHLIYFRFYHKLLRDFKLVELNEPVKNLICQGMVLSEAFYQFDKNNQRNWIHPSCVQVEKNLKGETIKVDIKNKKKVIYAGMIKMSKSKNNGIEPELMINRYGADTLRLFIMFAAPIESSLEWRESGVKGIYRFLKKIWKLVFNHIEVKKINKKVNFDILNKKQKKMYCLLHKTIIKVSDDIGRRKSFNTAISSIMELVNELSIFKIENEEDKSIIKESLMSIIKMLYPFTPHFCFRLWQYLNKNCCIDYETWPTFEKKILSSDKNTLIIQINGKKQCAIEVKNHLNKEEILSYIENQSIIQKKIKNLKIIKIIYIPQKVINFVV.

A 'HIGH' region motif is present at residues Pro-42 to His-52. A 'KMSKS' region motif is present at residues Lys-620 to Ser-624. An ATP-binding site is contributed by Lys-623.

The protein belongs to the class-I aminoacyl-tRNA synthetase family.

It is found in the cytoplasm. The enzyme catalyses tRNA(Leu) + L-leucine + ATP = L-leucyl-tRNA(Leu) + AMP + diphosphate. In Buchnera aphidicola subsp. Schizaphis graminum (strain Sg), this protein is Leucine--tRNA ligase.